Consider the following 441-residue polypeptide: Putative cytochrome P450 138 (441 aa).

C388 is a heme binding site.

It belongs to the cytochrome P450 family. It depends on heme as a cofactor.

The sequence is that of Putative cytochrome P450 138 (cyp138) from Mycobacterium bovis (strain ATCC BAA-935 / AF2122/97).